The following is a 125-amino-acid chain: Putative oxygen-evolving enhancer protein 2-2 (125 aa).

Position 15 is a phosphoserine (S15).

This sequence belongs to the PsbP family.

The polypeptide is Putative oxygen-evolving enhancer protein 2-2 (PSBP2) (Arabidopsis thaliana (Mouse-ear cress)).